Consider the following 127-residue polypeptide: C-C motif chemokine 28 (127 aa).

A signal peptide spans 1 to 19 (MQQRGLAIVALAVCAALHA). 2 disulfides stabilise this stretch: Cys30–Cys58 and Cys31–Cys73. Asn78 carries an N-linked (GlcNAc...) asparagine glycan. The segment covering 92-115 (KNGKGNVCHRKKHHGKRNSNRAHQ) has biased composition (basic residues). A disordered region spans residues 92–127 (KNGKGNVCHRKKHHGKRNSNRAHQGKHETYGHKTPY). Residues 116–127 (GKHETYGHKTPY) are compositionally biased toward basic and acidic residues.

The protein belongs to the intercrine beta (chemokine CC) family. As to expression, preferentially expressed by epithelial cells of diverse tissues including normal and pathological colon, salivary gland, mammary gland, trachea and rectum. Also found in prostate, spleen, thyroid, psoriasis skin and in lower levels in peripheral blood leukocytes, small intestine, Peyer patches, stomach and normal skin.

Its subcellular location is the secreted. Chemotactic activity for resting CD4, CD8 T-cells and eosinophils. Binds to CCR3 and CCR10 and induces calcium mobilization in a dose-dependent manner. This is C-C motif chemokine 28 (CCL28) from Homo sapiens (Human).